The chain runs to 491 residues: UDP-N-acetylmuramate--L-alanine ligase (491 aa).

G126–T132 provides a ligand contact to ATP.

It belongs to the MurCDEF family.

Its subcellular location is the cytoplasm. The catalysed reaction is UDP-N-acetyl-alpha-D-muramate + L-alanine + ATP = UDP-N-acetyl-alpha-D-muramoyl-L-alanine + ADP + phosphate + H(+). It participates in cell wall biogenesis; peptidoglycan biosynthesis. Cell wall formation. The polypeptide is UDP-N-acetylmuramate--L-alanine ligase (Yersinia enterocolitica serotype O:8 / biotype 1B (strain NCTC 13174 / 8081)).